The primary structure comprises 412 residues: Peptidase T (412 aa).

H81 contributes to the Zn(2+) binding site. D83 is an active-site residue. Residue D144 coordinates Zn(2+). E178 serves as the catalytic Proton acceptor. 3 residues coordinate Zn(2+): E179, D201, and H383.

It belongs to the peptidase M20B family. It depends on Zn(2+) as a cofactor.

It is found in the cytoplasm. It carries out the reaction Release of the N-terminal residue from a tripeptide.. Functionally, cleaves the N-terminal amino acid of tripeptides. The polypeptide is Peptidase T (Bacillus cereus (strain ZK / E33L)).